We begin with the raw amino-acid sequence, 477 residues long: Aspartyl/glutamyl-tRNA(Asn/Gln) amidotransferase subunit B (477 aa).

It belongs to the GatB/GatE family. GatB subfamily. In terms of assembly, heterotrimer of A, B and C subunits.

The enzyme catalyses L-glutamyl-tRNA(Gln) + L-glutamine + ATP + H2O = L-glutaminyl-tRNA(Gln) + L-glutamate + ADP + phosphate + H(+). The catalysed reaction is L-aspartyl-tRNA(Asn) + L-glutamine + ATP + H2O = L-asparaginyl-tRNA(Asn) + L-glutamate + ADP + phosphate + 2 H(+). In terms of biological role, allows the formation of correctly charged Asn-tRNA(Asn) or Gln-tRNA(Gln) through the transamidation of misacylated Asp-tRNA(Asn) or Glu-tRNA(Gln) in organisms which lack either or both of asparaginyl-tRNA or glutaminyl-tRNA synthetases. The reaction takes place in the presence of glutamine and ATP through an activated phospho-Asp-tRNA(Asn) or phospho-Glu-tRNA(Gln). This Streptococcus sanguinis (strain SK36) protein is Aspartyl/glutamyl-tRNA(Asn/Gln) amidotransferase subunit B.